Consider the following 105-residue polypeptide: UPF0145 protein VP1283 (105 aa).

This sequence belongs to the UPF0145 family.

The protein is UPF0145 protein VP1283 of Vibrio parahaemolyticus serotype O3:K6 (strain RIMD 2210633).